Consider the following 405-residue polypeptide: Deoxyguanosinetriphosphate triphosphohydrolase-like protein (405 aa).

Residues 75 to 219 form the HD domain; that stretch reads RLTHTIEVAQ…AAIADDIAYN (145 aa).

Belongs to the dGTPase family. Type 2 subfamily.

The polypeptide is Deoxyguanosinetriphosphate triphosphohydrolase-like protein (Rhizobium leguminosarum bv. trifolii (strain WSM2304)).